Reading from the N-terminus, the 293-residue chain is Carbapenem-hydrolyzing beta-lactamase KPC (293 aa).

The N-terminal stretch at M1–A24 is a signal peptide. Catalysis depends on S69, which acts as the Acyl-ester intermediate. E167 functions as the Proton acceptor in the catalytic mechanism. Residue K233–G235 coordinates substrate.

The protein belongs to the class-A beta-lactamase family.

It carries out the reaction a beta-lactam + H2O = a substituted beta-amino acid. With respect to regulation, not inhibited by EDTA, inhibited by clavulanic acid and tazobactam. Its function is as follows. Hydrolyzes carbapenems, penicillins, cephalosporins and aztreonam with varying efficiency. The chain is Carbapenem-hydrolyzing beta-lactamase KPC (bla) from Klebsiella oxytoca.